The following is a 1198-amino-acid chain: Rac guanine nucleotide exchange factor B (1198 aa).

Residues 1–104 (MFSNFFGSSK…QHQGVITSLQ (104 aa)) form a disordered region. Residues 8–20 (SSKRNTIASSSSS) are compositionally biased toward low complexity. Over residues 21 to 34 (SKKDKDNGKDESSK) the composition is skewed to basic and acidic residues. Residues 35 to 58 (LKNSGSSTLPKPITNNESGNNFIT) show a composition bias toward polar residues. Residues 59-97 (SPSVSSPLISPLSSSPSPLLSSSSNSIQSTSHQQQQQHQ) show a composition bias toward low complexity. Residues 126–232 (SSLEQTARKW…NIVVLGKHAS (107 aa)) enclose the Calponin-homology (CH) 1 domain. The disordered stretch occupies residues 260–284 (FGGNHNNNNNNNNNNNTSNGDLSPV). Over residues 263 to 275 (NHNNNNNNNNNNN) the composition is skewed to low complexity. Calponin-homology (CH) domains are found at residues 341-449 (PELQ…NKMY) and 511-619 (PEDM…ENFD). In terms of domain architecture, DH spans 632 to 846 (RRQKVIEEII…KRVADHVNES (215 aa)). The 151-residue stretch at 876-1026 (TYIREGFLEI…WMEDLRSCLQ (151 aa)) folds into the PH domain. The segment covering 940-952 (GEACVDGDDDGGE) has biased composition (acidic residues). Disordered regions lie at residues 940 to 989 (GEAC…SNKS) and 1076 to 1198 (NNNN…IDNQ). Low complexity-rich tracts occupy residues 977 to 989 (NSNN…SNKS) and 1076 to 1118 (NNNN…NNND). Residues 1155-1167 (DETISDTESDDYE) show a composition bias toward acidic residues. Polar residues predominate over residues 1188-1198 (FSDTIKNIDNQ).

As to quaternary structure, binds to F-actin.

It localises to the late endosome. Its function is as follows. Involved in the regulation of the late steps of the endocytic pathway. This Dictyostelium discoideum (Social amoeba) protein is Rac guanine nucleotide exchange factor B (gxcB).